Consider the following 420-residue polypeptide: Pectate lyase (420 aa).

An N-terminal signal peptide occupies residues 1–21 (MKKVMLATALFLGLTPAGANA). Residues 117–139 (TWGKKEPSGTQEEARARSQKNQK) form a disordered region. The span at 119-132 (GKKEPSGTQEEARA) shows a compositional bias: basic and acidic residues. Ca(2+) contacts are provided by Asp205, Asp244, and Asp248. Residue Arg300 is part of the active site.

This sequence belongs to the polysaccharide lyase 1 family. Monomer. Ca(2+) is required as a cofactor.

Its subcellular location is the secreted. It catalyses the reaction Eliminative cleavage of (1-&gt;4)-alpha-D-galacturonan to give oligosaccharides with 4-deoxy-alpha-D-galact-4-enuronosyl groups at their non-reducing ends.. The protein operates within glycan metabolism; pectin degradation; 2-dehydro-3-deoxy-D-gluconate from pectin: step 2/5. Functionally, produces unsaturated products from polygalacturonate. This chain is Pectate lyase (pel), found in Bacillus subtilis (strain 168).